The chain runs to 329 residues: Glyceraldehyde-3-phosphate dehydrogenase 1 (329 aa).

Residues 11–12 (RI), D33, and E77 contribute to the NAD(+) site. Phosphoserine is present on S148. D-glyceraldehyde 3-phosphate is bound at residue 148 to 150 (SCT). C149 (nucleophile) is an active-site residue. S177 carries the post-translational modification Phosphoserine. T179 lines the D-glyceraldehyde 3-phosphate pocket. A Phosphoserine modification is found at S200. Residues 208–209 (TG) and R231 contribute to the D-glyceraldehyde 3-phosphate site. N313 is an NAD(+) binding site.

Belongs to the glyceraldehyde-3-phosphate dehydrogenase family. In terms of assembly, homotetramer.

It is found in the cytoplasm. It carries out the reaction D-glyceraldehyde 3-phosphate + phosphate + NAD(+) = (2R)-3-phospho-glyceroyl phosphate + NADH + H(+). It functions in the pathway carbohydrate degradation; glycolysis; pyruvate from D-glyceraldehyde 3-phosphate: step 1/5. In Kluyveromyces marxianus (Yeast), this protein is Glyceraldehyde-3-phosphate dehydrogenase 1.